Consider the following 117-residue polypeptide: Protein TCL1B2 (117 aa).

This sequence belongs to the TCL1 family.

The protein is Protein TCL1B2 (Tcl1b2) of Mus musculus (Mouse).